The sequence spans 176 residues: MSEQKQEFENENAENSEHLQDENLQNIEDVEQNKLQKDYDELKDKYMRANAEFENIKKRMEKEKLSAMAYANESFAKDLLDVLDALEAAINVECHDEISLKIKEGVQNTLDLFLKKLEKYGVTLIKEEKEFDPNLHEAMFHVDGENHQSGEVVTVLQKGYKIADRVIRPTKVSVAK.

The tract at residues 1-31 (MSEQKQEFENENAENSEHLQDENLQNIEDVE) is disordered.

The protein belongs to the GrpE family. Homodimer.

It localises to the cytoplasm. Its function is as follows. Participates actively in the response to hyperosmotic and heat shock by preventing the aggregation of stress-denatured proteins, in association with DnaK and GrpE. It is the nucleotide exchange factor for DnaK and may function as a thermosensor. Unfolded proteins bind initially to DnaJ; upon interaction with the DnaJ-bound protein, DnaK hydrolyzes its bound ATP, resulting in the formation of a stable complex. GrpE releases ADP from DnaK; ATP binding to DnaK triggers the release of the substrate protein, thus completing the reaction cycle. Several rounds of ATP-dependent interactions between DnaJ, DnaK and GrpE are required for fully efficient folding. The chain is Protein GrpE from Campylobacter jejuni subsp. doylei (strain ATCC BAA-1458 / RM4099 / 269.97).